A 454-amino-acid polypeptide reads, in one-letter code: Prenyltransferase nscD (454 aa).

This sequence belongs to the tryptophan dimethylallyltransferase family.

It participates in secondary metabolite biosynthesis. Its function is as follows. Prenyltransferase; part of the gene cluster that mediates the biosynthesis of neosartoricin, a prenylated anthracenone that exhibits T-cell antiproliferative activity, suggestive of a physiological role as an immunosuppressive agent. The non-reducing polyketide synthase nscA probably synthesizes and cyclizes the decaketide backbone. The hydrolase nscB then mediates the product release through hydrolysis followed by spontaneous decarboxylation. The prenyltransferase nscD catalyzes the addition of the dimethylallyl group to the aromatic C5. The FAD-dependent monooxygenase nscC is then responsible for the stereospecific hydroxylation at C2. There is no gene encoding O-acetyltransferase in the nsc gene cluster; thus, the last step of 2-O-acetylation leading to neosartoricin may be catalyzed by an unidentified O-acetyltransferase. The protein is Prenyltransferase nscD of Neosartorya fischeri (strain ATCC 1020 / DSM 3700 / CBS 544.65 / FGSC A1164 / JCM 1740 / NRRL 181 / WB 181) (Aspergillus fischerianus).